Here is a 491-residue protein sequence, read N- to C-terminus: Cobyric acid synthase (491 aa).

One can recognise a GATase cobBQ-type domain in the interval 250–439; it reads EVTIAVIRLP…LHGIFDNGAW (190 aa). Cysteine 331 functions as the Nucleophile in the catalytic mechanism. Histidine 431 is a catalytic residue.

It belongs to the CobB/CobQ family. CobQ subfamily.

Its pathway is cofactor biosynthesis; adenosylcobalamin biosynthesis. In terms of biological role, catalyzes amidations at positions B, D, E, and G on adenosylcobyrinic A,C-diamide. NH(2) groups are provided by glutamine, and one molecule of ATP is hydrogenolyzed for each amidation. The chain is Cobyric acid synthase from Synechococcus elongatus (strain ATCC 33912 / PCC 7942 / FACHB-805) (Anacystis nidulans R2).